The chain runs to 218 residues: MAMFEQMRANVGKLLKGIDRYNPENLATLERYVETQAKENAYDLEANLAVLKLYQFNPAFFQTTVTAQILLKALTNLPHTDFTLCKCMIDQAHQEERPIRQILYLGDLLETCHFQAFWQALDENMDLLEGITGFEDSVRKFICHVVGITYQHIDRWLLAEMLGDLTDSQLKVWMSKYGWSADESGQIFICSQEESIKPKNIVEKIDFDSVSSIMASSQ.

At alanine 2 the chain carries N-acetylalanine. The residue at position 28 (threonine 28) is a Phosphothreonine. The PCI domain occupies 42-204 (YDLEANLAVL…SIKPKNIVEK (163 aa)). Serine 217 is modified (phosphoserine).

The protein belongs to the eIF-3 subunit K family. In terms of assembly, component of the eukaryotic translation initiation factor 3 (eIF-3) complex, which is composed of 13 subunits: EIF3A, EIF3B, EIF3C, EIF3D, EIF3E, EIF3F, EIF3G, EIF3H, EIF3I, EIF3J, EIF3K, EIF3L and EIF3M. The eIF-3 complex appears to include 3 stable modules: module A is composed of EIF3A, EIF3B, EIF3G and EIF3I; module B is composed of EIF3F, EIF3H, and EIF3M; and module C is composed of EIF3C, EIF3D, EIF3E, EIF3K and EIF3L. EIF3C of module C binds EIF3B of module A and EIF3H of module B, thereby linking the three modules. EIF3J is a labile subunit that binds to the eIF-3 complex via EIF3B. The eIF-3 complex interacts with RPS6KB1 under conditions of nutrient depletion. Mitogenic stimulation leads to binding and activation of a complex composed of MTOR and RPTOR, leading to phosphorylation and release of RPS6KB1 and binding of EIF4B to eIF-3. Interacts with CCND3, but not with CCND1 and CCND2.

Its subcellular location is the nucleus. It localises to the cytoplasm. Functionally, component of the eukaryotic translation initiation factor 3 (eIF-3) complex, which is required for several steps in the initiation of protein synthesis. The eIF-3 complex associates with the 40S ribosome and facilitates the recruitment of eIF-1, eIF-1A, eIF-2:GTP:methionyl-tRNAi and eIF-5 to form the 43S pre-initiation complex (43S PIC). The eIF-3 complex stimulates mRNA recruitment to the 43S PIC and scanning of the mRNA for AUG recognition. The eIF-3 complex is also required for disassembly and recycling of post-termination ribosomal complexes and subsequently prevents premature joining of the 40S and 60S ribosomal subunits prior to initiation. The eIF-3 complex specifically targets and initiates translation of a subset of mRNAs involved in cell proliferation, including cell cycling, differentiation and apoptosis, and uses different modes of RNA stem-loop binding to exert either translational activation or repression. This chain is Eukaryotic translation initiation factor 3 subunit K, found in Bos taurus (Bovine).